The primary structure comprises 319 residues: tRNA dimethylallyltransferase (319 aa).

An ATP-binding site is contributed by 9-16 (GPTAVGKS). 11-16 (TAVGKS) serves as a coordination point for substrate. Residues 39-42 (DSMQ) form an interaction with substrate tRNA region.

This sequence belongs to the IPP transferase family. Monomer. Requires Mg(2+) as cofactor.

The enzyme catalyses adenosine(37) in tRNA + dimethylallyl diphosphate = N(6)-dimethylallyladenosine(37) in tRNA + diphosphate. Catalyzes the transfer of a dimethylallyl group onto the adenine at position 37 in tRNAs that read codons beginning with uridine, leading to the formation of N6-(dimethylallyl)adenosine (i(6)A). The polypeptide is tRNA dimethylallyltransferase (Thermobifida fusca (strain YX)).